The primary structure comprises 583 residues: Protein translocase subunit SecD (583 aa).

The next 6 helical transmembrane spans lie at 7–27, 419–439, 446–468, 469–489, 511–531, and 538–558; these read FGVV…TLQW, LVWG…EAGV, LLNL…LSSI, AGMI…FERI, FWAI…LSVL, and GFAY…LFVS.

The protein belongs to the SecD/SecF family. SecD subfamily. As to quaternary structure, forms a complex with SecF. Part of the essential Sec protein translocation apparatus which comprises SecA, SecYEG and auxiliary proteins SecDF. Other proteins may also be involved.

It localises to the cell inner membrane. Functionally, part of the Sec protein translocase complex. Interacts with the SecYEG preprotein conducting channel. SecDF uses the proton motive force (PMF) to complete protein translocation after the ATP-dependent function of SecA. In Treponema pallidum (strain Nichols), this protein is Protein translocase subunit SecD.